The sequence spans 304 residues: N-acetylmuramic acid 6-phosphate etherase (304 aa).

In terms of domain architecture, SIS spans Ile62–Lys225. The active-site Proton donor is the Glu90. Residue Glu121 is part of the active site.

This sequence belongs to the GCKR-like family. MurNAc-6-P etherase subfamily. As to quaternary structure, homodimer.

It carries out the reaction N-acetyl-D-muramate 6-phosphate + H2O = N-acetyl-D-glucosamine 6-phosphate + (R)-lactate. The protein operates within amino-sugar metabolism; 1,6-anhydro-N-acetylmuramate degradation. It participates in amino-sugar metabolism; N-acetylmuramate degradation. Its pathway is cell wall biogenesis; peptidoglycan recycling. In terms of biological role, specifically catalyzes the cleavage of the D-lactyl ether substituent of MurNAc 6-phosphate, producing GlcNAc 6-phosphate and D-lactate. Together with AnmK, is also required for the utilization of anhydro-N-acetylmuramic acid (anhMurNAc) either imported from the medium or derived from its own cell wall murein, and thus plays a role in cell wall recycling. The polypeptide is N-acetylmuramic acid 6-phosphate etherase (Glaesserella parasuis serovar 5 (strain SH0165) (Haemophilus parasuis)).